The chain runs to 1037 residues: Presequence protease, mitochondrial (1037 aa).

Residues 1–28 (MWRCGGRQGLCVLRRLSGGHAHHRAWRW) constitute a mitochondrion transit peptide. H104 provides a ligand contact to Zn(2+). The Proton acceptor role is filled by E107. H108 contacts Zn(2+). C119 and C556 are oxidised to a cystine. E180 is an active-site residue. Residue E205 participates in Zn(2+) binding. N6-acetyllysine is present on K759. The residue at position 770 (K770) is an N6-acetyllysine; alternate. K770 carries the post-translational modification N6-succinyllysine; alternate. Basic residues predominate over residues 804-814 (GRSKKERRPVR). Residues 804-834 (GRSKKERRPVRPHTVEKPVPSSSGGDAHVPH) are disordered. K849 bears the N6-succinyllysine mark. N6-acetyllysine is present on K884. K946 is modified (N6-succinyllysine).

It belongs to the peptidase M16 family. PreP subfamily. Monomer and homodimer; homodimerization is induced by binding of the substrate. It depends on Zn(2+) as a cofactor. Post-translationally, a disulfide bond locks the enzyme in the closed conformation preventing substrate entry into the catalytic chamber. As to expression, widely expressed. Expressed at higher level in muscle and heart compared to brain, pancreas, liver, lung and placenta.

The protein resides in the mitochondrion. The protein localises to the mitochondrion matrix. Mainly exists in a closed and catalytically competent conformation but a closed-to-open switch allows substrate entry into the catalytic chamber. Substrate binding induces closure and dimerization. A disulfide bond may lock the enzyme in a closed conformation preventing substrate entry into the catalytic chamber, participating in redox regulation of the enzyme. Inhibited by metal-chelating agents. Inhibited by nickel and zinc excess, and slightly activated by manganese. Its function is as follows. Metalloendopeptidase of the mitochondrial matrix that functions in peptide cleavage and degradation rather than in protein processing. Has an ATP-independent activity. Specifically cleaves peptides in the range of 5 to 65 residues. Shows a preference for cleavage after small polar residues and before basic residues, but without any positional preference. Degrades the transit peptides of mitochondrial proteins after their cleavage. Also degrades other unstructured peptides. It is also able to degrade amyloid-beta protein 40, one of the peptides produced by APP processing, when it accumulates in mitochondrion. It is a highly efficient protease, at least toward amyloid-beta protein 40. Cleaves that peptide at a specific position and is probably not processive, releasing digested peptides intermediates that can be further cleaved subsequently. It is also able to degrade amyloid-beta protein 42. In Homo sapiens (Human), this protein is Presequence protease, mitochondrial.